The primary structure comprises 355 residues: tRNA uridine(34) hydroxylase (355 aa).

Residues 146 to 240 enclose the Rhodanese domain; the sequence is DDPDTLFVDM…YARKAKEQGL (95 aa). Cys200 (cysteine persulfide intermediate) is an active-site residue. The interval 333–355 is disordered; sequence NKSKGLLQATMHIPSPEKSADEK.

The protein belongs to the TrhO family.

It catalyses the reaction uridine(34) in tRNA + AH2 + O2 = 5-hydroxyuridine(34) in tRNA + A + H2O. Catalyzes oxygen-dependent 5-hydroxyuridine (ho5U) modification at position 34 in tRNAs. The protein is tRNA uridine(34) hydroxylase of Yersinia pseudotuberculosis serotype O:1b (strain IP 31758).